The sequence spans 92 residues: Alpha-conotoxin FrXXA 2 (92 aa).

A signal peptide spans 1–24 (MPKLEMMLLVLLILPLPYFDAAGG). A propeptide spanning residues 25–45 (QAVQGDGHGDGMDRYLQRDDR) is cleaved from the precursor. 4 cysteine pairs are disulfide-bonded: Cys63-Cys72, Cys68-Cys80, Cys73-Cys90, and Cys78-Cys92.

The protein belongs to the conotoxin D superfamily. Homodimer; disulfide-linked. The homodimer contains 10 disulfide bonds. As to expression, expressed by the venom duct.

Its subcellular location is the secreted. Functionally, alpha-conotoxins act on postsynaptic membranes, they bind to the nicotinic acetylcholine receptors (nAChR) and thus inhibit them. Through its two C-terminal domains, this homodimeric protein would bind to two nAChR allosteric sites, located outside the nAChR C-loop of the principal binding face and at the adjacent binding interface in a clockwise direction. Component 4b which seems to correspond to this toxin blocks both neuronal and muscular subtypes: human alpha-7/CHRNA7 (IC(50)=125 nM), human alpha-3-beta-2 (CHRNA3-CHRNB2) (IC(50)=282 nM), human alpha-4-beta-2 (CHRNA4-CHRNB2) (IC(50)=697 nM), mouse adult muscular subtype alpha-1-beta-1-delta-epsilon (CHRNA1-CHRNB1-CHRND-CHRNE) (IC(50)=351 nM), and mouse fetal muscular subtype alpha-1-beta-1-gamma-delta (CHRNA1-CHRNB1-CHRNG-CHRND) (IC(50)=447 nM). It shows different dissociation rates towards the different subtypes, with a very slow rate towards alpha-7 subtype (almost irreversible), followed by the adult muscular subtype, the fetal muscular subtype, alpha-3-beta-2 and alpha-4-beta-2 (almost entirely reversible within a few minutes of washing). This Conus fergusoni (Ferguson's cone) protein is Alpha-conotoxin FrXXA 2.